The primary structure comprises 138 residues: Large ribosomal subunit protein bL19 (138 aa).

The protein belongs to the bacterial ribosomal protein bL19 family.

This protein is located at the 30S-50S ribosomal subunit interface and may play a role in the structure and function of the aminoacyl-tRNA binding site. This Rickettsia typhi (strain ATCC VR-144 / Wilmington) protein is Large ribosomal subunit protein bL19.